Consider the following 287-residue polypeptide: Acetyl-coenzyme A carboxylase carboxyl transferase subunit beta (287 aa).

The region spanning 33–287 (LFSKCPGCKH…TLLAFHGGQA (255 aa)) is the CoA carboxyltransferase N-terminal domain. Zn(2+) is bound by residues C37, C40, C55, and C58. The C4-type zinc-finger motif lies at 37 to 58 (CPGCKHTIYQKDLGNDSVCPNC).

Belongs to the AccD/PCCB family. As to quaternary structure, acetyl-CoA carboxylase is a heterohexamer composed of biotin carboxyl carrier protein (AccB), biotin carboxylase (AccC) and two subunits each of ACCase subunit alpha (AccA) and ACCase subunit beta (AccD). Zn(2+) is required as a cofactor.

Its subcellular location is the cytoplasm. It catalyses the reaction N(6)-carboxybiotinyl-L-lysyl-[protein] + acetyl-CoA = N(6)-biotinyl-L-lysyl-[protein] + malonyl-CoA. It participates in lipid metabolism; malonyl-CoA biosynthesis; malonyl-CoA from acetyl-CoA: step 1/1. Component of the acetyl coenzyme A carboxylase (ACC) complex. Biotin carboxylase (BC) catalyzes the carboxylation of biotin on its carrier protein (BCCP) and then the CO(2) group is transferred by the transcarboxylase to acetyl-CoA to form malonyl-CoA. The sequence is that of Acetyl-coenzyme A carboxylase carboxyl transferase subunit beta from Streptococcus sanguinis (strain SK36).